A 138-amino-acid chain; its full sequence is Ribosomal RNA large subunit methyltransferase H (138 aa).

S-adenosyl-L-methionine is bound by residues leucine 57, glycine 86, and 105–110 (LSPLTF).

The protein belongs to the RNA methyltransferase RlmH family. As to quaternary structure, homodimer.

The protein resides in the cytoplasm. The enzyme catalyses pseudouridine(1915) in 23S rRNA + S-adenosyl-L-methionine = N(3)-methylpseudouridine(1915) in 23S rRNA + S-adenosyl-L-homocysteine + H(+). In terms of biological role, specifically methylates the pseudouridine at position 1915 (m3Psi1915) in 23S rRNA. This chain is Ribosomal RNA large subunit methyltransferase H, found in Prochlorococcus marinus (strain MIT 9312).